The chain runs to 296 residues: Phosphatidylglycerol--prolipoprotein diacylglyceryl transferase (296 aa).

3 helical membrane passes run 17 to 37 (LAVR…IVVG), 59 to 79 (MMFY…VLFY), and 97 to 117 (GGMS…LFAW). Residue Arg-142 coordinates a 1,2-diacyl-sn-glycero-3-phospho-(1'-sn-glycerol). A run of 2 helical transmembrane segments spans residues 230–250 (MGAI…TVEF) and 265–285 (LSMG…MMIW).

Belongs to the Lgt family.

The protein localises to the cell inner membrane. It catalyses the reaction L-cysteinyl-[prolipoprotein] + a 1,2-diacyl-sn-glycero-3-phospho-(1'-sn-glycerol) = an S-1,2-diacyl-sn-glyceryl-L-cysteinyl-[prolipoprotein] + sn-glycerol 1-phosphate + H(+). The protein operates within protein modification; lipoprotein biosynthesis (diacylglyceryl transfer). Functionally, catalyzes the transfer of the diacylglyceryl group from phosphatidylglycerol to the sulfhydryl group of the N-terminal cysteine of a prolipoprotein, the first step in the formation of mature lipoproteins. This is Phosphatidylglycerol--prolipoprotein diacylglyceryl transferase from Burkholderia mallei (strain NCTC 10247).